We begin with the raw amino-acid sequence, 612 residues long: UvrABC system protein C (612 aa).

Residues 15–93 (HLPGVYRMYD…IKQHQPKYNV (79 aa)) enclose the GIY-YIG domain. Residues 203-238 (SQVIDYLMQKMEIAASELDFETAARFRDQIQSVRAV) enclose the UVR domain.

It belongs to the UvrC family. In terms of assembly, interacts with UvrB in an incision complex.

It is found in the cytoplasm. In terms of biological role, the UvrABC repair system catalyzes the recognition and processing of DNA lesions. UvrC both incises the 5' and 3' sides of the lesion. The N-terminal half is responsible for the 3' incision and the C-terminal half is responsible for the 5' incision. The chain is UvrABC system protein C from Haemophilus ducreyi (strain 35000HP / ATCC 700724).